We begin with the raw amino-acid sequence, 117 residues long: Acylphosphatase (117 aa).

An Acylphosphatase-like domain is found at 31–117; the sequence is RWRWIIQGQV…RGDDWFEVRY (87 aa). Catalysis depends on residues R46 and N64.

The protein belongs to the acylphosphatase family.

It carries out the reaction an acyl phosphate + H2O = a carboxylate + phosphate + H(+). The chain is Acylphosphatase (acyP) from Synechococcus sp. (strain CC9902).